A 151-amino-acid polypeptide reads, in one-letter code: Non-specific lipid transfer protein GPI-anchored 30 (151 aa).

The N-terminal stretch at 1–22 (MMMGMKFFSFYVVLLLVAASSG) is a signal peptide. 4 disulfides stabilise this stretch: Cys32–Cys69, Cys39–Cys53, Cys54–Cys97, and Cys67–Cys106. Asn44 is a glycosylation site (N-linked (GlcNAc...) asparagine). Ser120 carries GPI-anchor amidated serine lipidation. A propeptide spans 121–151 (SSIGNTFSQSYWMTTLAIAATVLSYCHHIIS) (removed in mature form).

This sequence belongs to the plant LTP family. In terms of tissue distribution, expressed in vascular tissues of all organs. Expressed in seedlings, preferentially in hypocotyls and roots. Also observed in siliques.

The protein localises to the cell membrane. In terms of biological role, lipid transfer protein that promotes the number of phloem (pro)cambial and pericycle cells. The sequence is that of Non-specific lipid transfer protein GPI-anchored 30 from Arabidopsis thaliana (Mouse-ear cress).